The following is a 745-amino-acid chain: DEAD-box ATP-dependent RNA helicase 3A, chloroplastic (745 aa).

The N-terminal 41 residues, 1-41 (MASLVTLPAIAFSNPATASGAVRLRAAAFRCWALRRRGWAV), are a transit peptide targeting the chloroplast. The short motif at 88 to 116 (LAIARLGLPDELVATLEKRGITHLFPIQR) is the Q motif element. The Helicase ATP-binding domain occupies 119–295 (LIPALGGRDL…RRYLNNPLTI (177 aa)). 132 to 139 (AKTGTGKT) lines the ATP pocket. The DEAD box motif lies at 243 to 246 (DEAD). The region spanning 324–469 (ILSDLITVYA…ISPPSIEEVL (146 aa)) is the Helicase C-terminal domain. Positions 606 to 724 (LTKISKLPAL…SLGGRESSRS (119 aa)) are disordered. Positions 641 to 650 (GGGASRGRGG) are enriched in gly residues. Positions 656–670 (EDRYRRGGRSLRSDN) are enriched in basic and acidic residues. Low complexity predominate over residues 687–724 (RSSSSFGGRSSSYGSRGSPSPSFGVRSSSLGGRESSRS). The CCHC-type zinc-finger motif lies at 727–744 (GACFNCGESGHRASDCPN).

This sequence belongs to the DEAD box helicase family. DDX21/DDX50 subfamily.

It is found in the plastid. The protein resides in the chloroplast. The enzyme catalyses ATP + H2O = ADP + phosphate + H(+). In terms of biological role, nuclear genome-encoded factor involved in ribosome biogenesis in chloroplasts. Binds specific group II introns in chloroplasts and facilitates their splicing. Required for normal development of chloroplasts. This is DEAD-box ATP-dependent RNA helicase 3A, chloroplastic from Zea mays (Maize).